Reading from the N-terminus, the 157-residue chain is NADPH-dependent 7-cyano-7-deazaguanine reductase (157 aa).

Cysteine 55 serves as the catalytic Thioimide intermediate. Aspartate 62 serves as the catalytic Proton donor. Substrate-binding positions include 77–79 (VES) and 96–97 (HE).

Belongs to the GTP cyclohydrolase I family. QueF type 1 subfamily.

The protein localises to the cytoplasm. The enzyme catalyses 7-aminomethyl-7-carbaguanine + 2 NADP(+) = 7-cyano-7-deazaguanine + 2 NADPH + 3 H(+). It functions in the pathway tRNA modification; tRNA-queuosine biosynthesis. Its function is as follows. Catalyzes the NADPH-dependent reduction of 7-cyano-7-deazaguanine (preQ0) to 7-aminomethyl-7-deazaguanine (preQ1). The protein is NADPH-dependent 7-cyano-7-deazaguanine reductase of Neisseria meningitidis serogroup B (strain ATCC BAA-335 / MC58).